A 91-amino-acid chain; its full sequence is Probable Fe(2+)-trafficking protein (91 aa).

This sequence belongs to the Fe(2+)-trafficking protein family.

In terms of biological role, could be a mediator in iron transactions between iron acquisition and iron-requiring processes, such as synthesis and/or repair of Fe-S clusters in biosynthetic enzymes. In Acidobacterium capsulatum (strain ATCC 51196 / DSM 11244 / BCRC 80197 / JCM 7670 / NBRC 15755 / NCIMB 13165 / 161), this protein is Probable Fe(2+)-trafficking protein.